The sequence spans 286 residues: Thymidylate synthase (286 aa).

DUMP contacts are provided by residues arginine 21 and arginine 136 to arginine 137. Catalysis depends on cysteine 156, which acts as the Nucleophile. Residues arginine 176 to aspartate 179, asparagine 187, and histidine 217 to tyrosine 219 each bind dUMP. Residue aspartate 179 participates in (6R)-5,10-methylene-5,6,7,8-tetrahydrofolate binding. Position 285 (alanine 285) interacts with (6R)-5,10-methylene-5,6,7,8-tetrahydrofolate.

The protein belongs to the thymidylate synthase family. In terms of assembly, homodimer.

It carries out the reaction dUMP + (6R)-5,10-methylene-5,6,7,8-tetrahydrofolate = 7,8-dihydrofolate + dTMP. It participates in pyrimidine metabolism; dTTP biosynthesis. The chain is Thymidylate synthase (TD) from Enterobacteria phage T4 (Bacteriophage T4).